The sequence spans 338 residues: Glycerol-3-phosphate dehydrogenase [NAD(P)+] (338 aa).

NADPH contacts are provided by Ser14, Tyr15, His35, and Lys109. The sn-glycerol 3-phosphate site is built by Lys109, Gly138, and Thr140. Residue Ala142 coordinates NADPH. Positions 194, 247, 257, 258, and 259 each coordinate sn-glycerol 3-phosphate. The active-site Proton acceptor is the Lys194. Residue Arg258 coordinates NADPH. NADPH-binding residues include Val282 and Glu284.

It belongs to the NAD-dependent glycerol-3-phosphate dehydrogenase family.

It localises to the cytoplasm. The enzyme catalyses sn-glycerol 3-phosphate + NAD(+) = dihydroxyacetone phosphate + NADH + H(+). It carries out the reaction sn-glycerol 3-phosphate + NADP(+) = dihydroxyacetone phosphate + NADPH + H(+). Its pathway is membrane lipid metabolism; glycerophospholipid metabolism. In terms of biological role, catalyzes the reduction of the glycolytic intermediate dihydroxyacetone phosphate (DHAP) to sn-glycerol 3-phosphate (G3P), the key precursor for phospholipid synthesis. The protein is Glycerol-3-phosphate dehydrogenase [NAD(P)+] of Shewanella putrefaciens (strain CN-32 / ATCC BAA-453).